The chain runs to 135 residues: Ribosome-binding factor A (135 aa).

This sequence belongs to the RbfA family. In terms of assembly, monomer. Binds 30S ribosomal subunits, but not 50S ribosomal subunits or 70S ribosomes.

It is found in the cytoplasm. In terms of biological role, one of several proteins that assist in the late maturation steps of the functional core of the 30S ribosomal subunit. Associates with free 30S ribosomal subunits (but not with 30S subunits that are part of 70S ribosomes or polysomes). Required for efficient processing of 16S rRNA. May interact with the 5'-terminal helix region of 16S rRNA. This Bartonella henselae (strain ATCC 49882 / DSM 28221 / CCUG 30454 / Houston 1) (Rochalimaea henselae) protein is Ribosome-binding factor A.